We begin with the raw amino-acid sequence, 662 residues long: Calcium-dependent protease (662 aa).

Residues 196-529 form the Peptidase S8 domain; that stretch reads QWHLKQTTIG…YGRINALKAV (334 aa). Catalysis depends on charge relay system residues aspartate 233, histidine 270, and serine 466. The 128-residue stretch at 535–662 folds into the P/Homo B domain; that stretch reads AQPEPVSIFT…IRSLTIELGF (128 aa).

This sequence belongs to the peptidase S8 family.

The protein resides in the cytoplasm. Functionally, degrades phycobiliproteins in vitro. Has a substrate specificity similar to that of trypsin. The protein is Calcium-dependent protease (prcA) of Trichormus variabilis (strain ATCC 29413 / PCC 7937) (Anabaena variabilis).